A 67-amino-acid polypeptide reads, in one-letter code: Small ribosomal subunit protein bS21 (67 aa).

Belongs to the bacterial ribosomal protein bS21 family.

In Nitratidesulfovibrio vulgaris (strain DSM 19637 / Miyazaki F) (Desulfovibrio vulgaris), this protein is Small ribosomal subunit protein bS21.